Consider the following 295-residue polypeptide: uncharacterized protein (295 aa).

Residues 57-67 are compositionally biased toward basic residues; it reads RKLLVKQKRKS. The segment at 57 to 94 is disordered; it reads RKLLVKQKRKSNKEFQSNIIKKRKDEERKGTLKTEQAN. The span at 79–88 shows a compositional bias: basic and acidic residues; it reads RKDEERKGTL. 2 coiled-coil regions span residues 87 to 116 and 259 to 286; these read TLKT…YDQY and DVLT…LGER.

The protein resides in the nucleus. This is an uncharacterized protein from Schizosaccharomyces pombe (strain 972 / ATCC 24843) (Fission yeast).